A 225-amino-acid polypeptide reads, in one-letter code: Proteasome activator 28 (225 aa).

The protein belongs to the PA28 family. As to quaternary structure, homoheptamer. The homoheptamer associates with the 20S proteasome.

It localises to the nucleus. Subunit of the 11S REG (also called PA28) proteasome regulator, a doughnut-shaped homoheptamer which associates with the proteasome. 11S REG-gamma activates preferentially the trypsin-like catalytic subunit of the proteasome. May also be involved in cell cycle regulation. This chain is Proteasome activator 28 (psmE3), found in Dictyostelium discoideum (Social amoeba).